The following is a 347-amino-acid chain: NADH-ubiquinone oxidoreductase chain 2 (347 aa).

A run of 11 helical transmembrane segments spans residues 2–22 (LSPL…LVTF), 26–46 (SWIL…PLMA), 60–80 (YFIA…LAAW), 94–114 (IILN…PMHF), 127–147 (TGMI…IQIA), 151–171 (NNAF…WGGL), 179–197 (IIAY…MAPF), 201–223 (ITWV…LNTL), 242–262 (MLLL…GFTN), 274–294 (NLVI…FFYT), and 325–345 (LMTM…AIFI).

This sequence belongs to the complex I subunit 2 family.

It localises to the mitochondrion inner membrane. It catalyses the reaction a ubiquinone + NADH + 5 H(+)(in) = a ubiquinol + NAD(+) + 4 H(+)(out). Its function is as follows. Core subunit of the mitochondrial membrane respiratory chain NADH dehydrogenase (Complex I) that is believed to belong to the minimal assembly required for catalysis. Complex I functions in the transfer of electrons from NADH to the respiratory chain. The immediate electron acceptor for the enzyme is believed to be ubiquinone. The sequence is that of NADH-ubiquinone oxidoreductase chain 2 (MT-ND2) from Lampetra fluviatilis (European river lamprey).